The primary structure comprises 858 residues: Bifunctional uridylyltransferase/uridylyl-removing enzyme (858 aa).

The tract at residues 1–318 (MNPTDLHPIK…FPRPESDARA (318 aa)) is uridylyltransferase. Residues 319–674 (IDEEFRSLHG…VRPTEEGSGL (356 aa)) form a uridylyl-removing region. An HD domain is found at 437–559 (VDQHTLAVIR…VKDERHLNAL (123 aa)). ACT domains lie at 675–756 (QIMV…LADV) and 789–858 (RLSV…LAGE).

This sequence belongs to the GlnD family. Mg(2+) serves as cofactor.

It catalyses the reaction [protein-PII]-L-tyrosine + UTP = [protein-PII]-uridylyl-L-tyrosine + diphosphate. The enzyme catalyses [protein-PII]-uridylyl-L-tyrosine + H2O = [protein-PII]-L-tyrosine + UMP + H(+). With respect to regulation, uridylyltransferase (UTase) activity is inhibited by glutamine, while glutamine activates uridylyl-removing (UR) activity. Functionally, modifies, by uridylylation and deuridylylation, the PII regulatory proteins (GlnB and homologs), in response to the nitrogen status of the cell that GlnD senses through the glutamine level. Under low glutamine levels, catalyzes the conversion of the PII proteins and UTP to PII-UMP and PPi, while under higher glutamine levels, GlnD hydrolyzes PII-UMP to PII and UMP (deuridylylation). Thus, controls uridylylation state and activity of the PII proteins, and plays an important role in the regulation of nitrogen assimilation and metabolism. The polypeptide is Bifunctional uridylyltransferase/uridylyl-removing enzyme (Bordetella avium (strain 197N)).